We begin with the raw amino-acid sequence, 132 residues long: CDGSH iron-sulfur domain-containing protein 2 homolog (132 aa).

Residues 1-35 (MEPISHLVKSSLPNYLSSLPVPDSLGGWFKLSFKD) lie on the Lumenal side of the membrane. Residues 36–58 (WLALIPPTAVLAGLGYTAYLAFC) traverse the membrane as a helical segment. The Cytoplasmic portion of the chain corresponds to 59 to 132 (PAAQCSAKSA…VGPVVVSKKK (74 aa)). Positions 97, 99, 108, and 112 each coordinate [2Fe-2S] cluster.

This sequence belongs to the CISD protein family. CISD2 subfamily. Requires [2Fe-2S] cluster as cofactor.

The protein resides in the endoplasmic reticulum membrane. This Drosophila grimshawi (Hawaiian fruit fly) protein is CDGSH iron-sulfur domain-containing protein 2 homolog.